Reading from the N-terminus, the 70-residue chain is DNA-directed RNA polymerase subunit omega (70 aa).

Belongs to the RNA polymerase subunit omega family. As to quaternary structure, the RNAP catalytic core consists of 2 alpha, 1 beta, 1 beta' and 1 omega subunit. When a sigma factor is associated with the core the holoenzyme is formed, which can initiate transcription.

The catalysed reaction is RNA(n) + a ribonucleoside 5'-triphosphate = RNA(n+1) + diphosphate. Functionally, promotes RNA polymerase assembly. Latches the N- and C-terminal regions of the beta' subunit thereby facilitating its interaction with the beta and alpha subunits. The polypeptide is DNA-directed RNA polymerase subunit omega (Nitratiruptor sp. (strain SB155-2)).